The primary structure comprises 165 residues: Large ribosomal subunit protein bL17 (165 aa).

A compositionally biased stretch (basic and acidic residues) spans 138–158 (QEKREAQEKAREEKRTARKSD). Positions 138 to 165 (QEKREAQEKAREEKRTARKSDSVPARKK) are disordered.

This sequence belongs to the bacterial ribosomal protein bL17 family. As to quaternary structure, part of the 50S ribosomal subunit. Contacts protein L32.

The chain is Large ribosomal subunit protein bL17 from Leptospira borgpetersenii serovar Hardjo-bovis (strain JB197).